Here is a 591-residue protein sequence, read N- to C-terminus: Fidgetin-like protein 1 (591 aa).

2 disordered regions span residues Met1–Leu117 and Gly223–Ile249. Positions Lys17–Gly26 are enriched in basic and acidic residues. The span at Asp76–Pro93 shows a compositional bias: acidic residues. The segment covering Arg237–Ile249 has biased composition (polar residues). ATP-binding positions include Ala319 and Gly359–Met364.

Belongs to the AAA ATPase family. In terms of assembly, hexamer. Requires Mg(2+) as cofactor.

It localises to the nucleus. It catalyses the reaction ATP + H2O = ADP + phosphate + H(+). Functionally, has a role in spindle assembly which acts in the progression through mitosis during embryogenesis. Required for fertility. The protein is Fidgetin-like protein 1 (figl-1) of Caenorhabditis briggsae.